We begin with the raw amino-acid sequence, 347 residues long: MSPYVLTIMSFSLLLGTTMTLISNHWLTAWMGLEINTLAIIPLMTKPHHPRSMESAIKYFMIQATASMIILFSAIFNASTTNQWMTGQISNTSASFMMTIALAMKLGLAPFHFWVPEVTQGIPLLSGMLLLTWQKIAPISIFYQISPSLNMSLLMILSITSTLLGGWGGLNQTQLRKILAYSSIAHMGWMAIIIMIYPSLTILNLILYLASTITMFMVLNQSSSTKINSLSILWNKSAPNMIIITLTLLSLGGLPPLTGFMPKWLILQELINFNNIPLAMMLALSTLLNLFFYMRIIYSSTLTMFPSINNTKMQWTLYSHKTISPIPTLTIISSLLLPMTPVFITLS.

11 helical membrane passes run 2-22 (SPYV…MTLI), 25-45 (HWLT…PLMT), 56-76 (AIKY…SAIF), 96-116 (FMMT…FWVP), 122-142 (IPLL…ISIF), 149-169 (LNMS…GWGG), 178-197 (ILAY…IMIY), 202-219 (ILNL…FMVL), 241-261 (MIII…TGFM), 278-298 (LAMM…RIIY), and 326-346 (IPTL…FITL).

Belongs to the complex I subunit 2 family.

The protein resides in the mitochondrion inner membrane. The catalysed reaction is a ubiquinone + NADH + 5 H(+)(in) = a ubiquinol + NAD(+) + 4 H(+)(out). In terms of biological role, core subunit of the mitochondrial membrane respiratory chain NADH dehydrogenase (Complex I) that is believed to belong to the minimal assembly required for catalysis. Complex I functions in the transfer of electrons from NADH to the respiratory chain. The immediate electron acceptor for the enzyme is believed to be ubiquinone. In Didelphis virginiana (North American opossum), this protein is NADH-ubiquinone oxidoreductase chain 2 (MT-ND2).